The following is a 107-amino-acid chain: Putative ankyrin repeat protein RP714 (107 aa).

ANK repeat units follow at residues 7–36 (PPLSPLIIAVLNGNIEYTSELLQNGVDIDV), 40–69 (NGNSALHIAASKGYTKIATMLLLYGATIDA), and 73–102 (ELATPLHYAAANNYKDLTQYLLNMNANKSA).

The polypeptide is Putative ankyrin repeat protein RP714 (Rickettsia prowazekii (strain Madrid E)).